The chain runs to 477 residues: Protein nucleotidyltransferase YdiU (477 aa).

G89, G91, R92, K112, D124, G125, R178, and R185 together coordinate ATP. Residue D257 is the Proton acceptor of the active site. Residues N258 and D267 each contribute to the Mg(2+) site. D267 is an ATP binding site.

The protein belongs to the SELO family. It depends on Mg(2+) as a cofactor. Mn(2+) is required as a cofactor.

The catalysed reaction is L-seryl-[protein] + ATP = 3-O-(5'-adenylyl)-L-seryl-[protein] + diphosphate. It carries out the reaction L-threonyl-[protein] + ATP = 3-O-(5'-adenylyl)-L-threonyl-[protein] + diphosphate. It catalyses the reaction L-tyrosyl-[protein] + ATP = O-(5'-adenylyl)-L-tyrosyl-[protein] + diphosphate. The enzyme catalyses L-histidyl-[protein] + UTP = N(tele)-(5'-uridylyl)-L-histidyl-[protein] + diphosphate. The catalysed reaction is L-seryl-[protein] + UTP = O-(5'-uridylyl)-L-seryl-[protein] + diphosphate. It carries out the reaction L-tyrosyl-[protein] + UTP = O-(5'-uridylyl)-L-tyrosyl-[protein] + diphosphate. Functionally, nucleotidyltransferase involved in the post-translational modification of proteins. It can catalyze the addition of adenosine monophosphate (AMP) or uridine monophosphate (UMP) to a protein, resulting in modifications known as AMPylation and UMPylation. This is Protein nucleotidyltransferase YdiU from Synechocystis sp. (strain ATCC 27184 / PCC 6803 / Kazusa).